Consider the following 92-residue polypeptide: SPbeta prophage-derived DNA-binding protein HU 2 (92 aa).

Thr4 carries the phosphothreonine modification. Residues 55–77 (RAARKGRNPQTGEEIDIPATKAP) are disordered.

It belongs to the bacterial histone-like protein family. In terms of assembly, homodimer.

In terms of biological role, histone-like DNA-binding protein which is capable of wrapping DNA to stabilize it, and thus to prevent its denaturation under extreme environmental conditions. The protein is SPbeta prophage-derived DNA-binding protein HU 2 (hup2) of Bacillus subtilis (strain 168).